Reading from the N-terminus, the 273-residue chain is 2,3,4,5-tetrahydropyridine-2,6-dicarboxylate N-succinyltransferase (273 aa).

R104 and D141 together coordinate substrate.

Belongs to the transferase hexapeptide repeat family. As to quaternary structure, homotrimer.

The protein localises to the cytoplasm. It catalyses the reaction (S)-2,3,4,5-tetrahydrodipicolinate + succinyl-CoA + H2O = (S)-2-succinylamino-6-oxoheptanedioate + CoA. The protein operates within amino-acid biosynthesis; L-lysine biosynthesis via DAP pathway; LL-2,6-diaminopimelate from (S)-tetrahydrodipicolinate (succinylase route): step 1/3. The protein is 2,3,4,5-tetrahydropyridine-2,6-dicarboxylate N-succinyltransferase of Blochmanniella pennsylvanica (strain BPEN).